The sequence spans 226 residues: Phosphoglycolate phosphatase (226 aa).

Asp9 functions as the Nucleophile in the catalytic mechanism. Residues Asp9 and Asp11 each contribute to the Mg(2+) site. Residue Lys150 participates in substrate binding. The Mg(2+) site is built by Asp173 and Asp177.

This sequence belongs to the archaeal SPP-like hydrolase family. Requires Mg(2+) as cofactor.

The enzyme catalyses 2-phosphoglycolate + H2O = glycolate + phosphate. In terms of biological role, catalyzes the dephosphorylation of 2-phosphoglycolate. The sequence is that of Phosphoglycolate phosphatase from Methanosarcina acetivorans (strain ATCC 35395 / DSM 2834 / JCM 12185 / C2A).